We begin with the raw amino-acid sequence, 76 residues long: Theta defensin subunit C (76 aa).

The first 22 residues, 1-22 (MRTFAFLTAMLLLVALHAQAEA), serve as a signal peptide directing secretion. The propeptide occupies 23-64 (RQARADEAAIQEQPGADDQGMAHSFTRNESAVLPLSESERGL). Arginine 65 is covalently cross-linked (Cyclopeptide (Arg-Cys) (interchain with C-73 in subunit A); in form BTD-4). Cysteine 68 and cysteine 73 are disulfide-bonded. A Cyclopeptide (Cys-Arg) (interchain with R-65 in subunit A); in form BTD-4 cross-link involves residue cysteine 73. The propeptide occupies 74–76 (RLL).

It belongs to the alpha-defensin family. Theta subfamily. In terms of assembly, BTD-4 is a cyclic heterodimer composed of subunits A and C; disulfide-linked. Post-translationally, forms a cyclic peptide with subunit A (BTD-4). An additional intersubunit disulfide bond is formed.

Its function is as follows. BTD-4 has antimicrobial activity against the Gram-negative bacterium E.coli ML35, the Gram-positive bacterium S.aureus 502a, and the fungus C.albicans 16820. The sequence is that of Theta defensin subunit C (BTDC) from Papio anubis (Olive baboon).